We begin with the raw amino-acid sequence, 121 residues long: Large ribosomal subunit protein bL12 (121 aa).

The protein belongs to the bacterial ribosomal protein bL12 family. As to quaternary structure, homodimer. Part of the ribosomal stalk of the 50S ribosomal subunit. Forms a multimeric L10(L12)X complex, where L10 forms an elongated spine to which 2 to 4 L12 dimers bind in a sequential fashion. Binds GTP-bound translation factors.

In terms of biological role, forms part of the ribosomal stalk which helps the ribosome interact with GTP-bound translation factors. Is thus essential for accurate translation. This chain is Large ribosomal subunit protein bL12, found in Shewanella piezotolerans (strain WP3 / JCM 13877).